Consider the following 429-residue polypeptide: Histidine--tRNA ligase (429 aa).

It belongs to the class-II aminoacyl-tRNA synthetase family. As to quaternary structure, homodimer.

Its subcellular location is the cytoplasm. The catalysed reaction is tRNA(His) + L-histidine + ATP = L-histidyl-tRNA(His) + AMP + diphosphate + H(+). In Alkalilimnicola ehrlichii (strain ATCC BAA-1101 / DSM 17681 / MLHE-1), this protein is Histidine--tRNA ligase.